Here is a 425-residue protein sequence, read N- to C-terminus: Beta-1,4-galactosyltransferase galt-1 (425 aa).

Residues 1-8 (MPRITASK) lie on the Cytoplasmic side of the membrane. A helical; Signal-anchor for type II membrane protein transmembrane segment spans residues 9-29 (IVLLIALSFCITVIYHFPIAT). At 30–425 (RSSKEYDEYG…FDSVVGLLDL (396 aa)) the chain is on the lumenal side. 2 N-linked (GlcNAc...) asparagine glycosylation sites follow: Asn109 and Asn152. Residues 189–394 (KMSICVPALF…LLRVYHYKDK (206 aa)) enclose the GT92 domain.

This sequence belongs to the glycosyltransferase 92 family. It depends on Mn(2+) as a cofactor. In terms of processing, N-glycosylated. As to expression, expressed in intestine and coelomocytes.

It localises to the golgi apparatus. The protein resides in the golgi stack membrane. Its activity is regulated as follows. Inhibited by EDTA, Cu(2+) and Zn(2+). Functionally, catalyzes the transfer of beta-galactose from UDP-galactose to position 4 of alpha-1,6-linked fucose at the reducing end GlcNAc in N-glycan cores. Involved in susceptibility to the nematotoxic C.cinerea galectin Cgl2, likely by contributing to the synthesis of core alpha-1,6-fucosylated N-glycans to which Cgl2 binds. The chain is Beta-1,4-galactosyltransferase galt-1 from Caenorhabditis elegans.